We begin with the raw amino-acid sequence, 250 residues long: 2,3-bisphosphoglycerate-dependent phosphoglycerate mutase (250 aa).

Substrate contacts are provided by residues 10 to 17 (RHGESQWN), 23 to 24 (TG), R62, 89 to 92 (ERHY), K100, 116 to 117 (RR), and 185 to 186 (GN). Residue H11 is the Tele-phosphohistidine intermediate of the active site. Catalysis depends on E89, which acts as the Proton donor/acceptor.

Belongs to the phosphoglycerate mutase family. BPG-dependent PGAM subfamily. As to quaternary structure, homodimer.

It carries out the reaction (2R)-2-phosphoglycerate = (2R)-3-phosphoglycerate. It participates in carbohydrate degradation; glycolysis; pyruvate from D-glyceraldehyde 3-phosphate: step 3/5. In terms of biological role, catalyzes the interconversion of 2-phosphoglycerate and 3-phosphoglycerate. This is 2,3-bisphosphoglycerate-dependent phosphoglycerate mutase from Serratia proteamaculans (strain 568).